Here is a 234-residue protein sequence, read N- to C-terminus: Bradykinin-releasing enzyme KR-E-1 (234 aa).

The Peptidase S1 domain maps to 1 to 225 (VIGGDECNIN…YSDWIQSIIA (225 aa)). Intrachain disulfides connect cysteine 7–cysteine 139, cysteine 26–cysteine 42, cysteine 74–cysteine 232, cysteine 118–cysteine 186, cysteine 150–cysteine 165, and cysteine 176–cysteine 201. Asparagine 20 carries N-linked (GlcNAc...) asparagine glycosylation. Residues histidine 41 and aspartate 86 each act as charge relay system in the active site. The active-site Charge relay system is serine 180.

Belongs to the peptidase S1 family. Snake venom subfamily. As to quaternary structure, monomer. As to expression, expressed by the venom gland.

The protein resides in the secreted. In terms of biological role, bradykinin-releasing enzyme. Releases bradykinin from bovine HMW kininogen. Has anticoagulant activity. Increases permeability of capillaries by intradermal injection into rabbits. In Gloydius ussuriensis (Ussuri mamushi), this protein is Bradykinin-releasing enzyme KR-E-1.